The following is a 974-amino-acid chain: Coiled-coil domain-containing protein 146 (974 aa).

The disordered stretch occupies residues 1–44; it reads MEDRSKYIAEESEDEEDEEQEEKEKKGGASTSTETEEDQEDIPS. Residues 10 to 21 are compositionally biased toward acidic residues; that stretch reads EESEDEEDEEQE. Ser-12 bears the Phosphoserine mark. Coiled coils occupy residues 105–160, 195–340, 421–474, 512–660, 687–712, and 767–848; these read VQLL…QERE, KLLK…TKEN, LPEQ…REVL, KKLE…NESG, QDIE…QRQI, and LTEE…ELSM.

Interacts with CCDC38 and CCDC42. Interacts with intraflagellar transport proteins IFT20 and IFT88.

Its subcellular location is the cytoplasm. It localises to the cytoskeleton. The protein resides in the microtubule organizing center. The protein localises to the centrosome. It is found in the centriole. Its subcellular location is the cell projection. It localises to the cilium. The protein resides in the flagellum. The protein localises to the flagellum axoneme. It is found in the cilium basal body. Its subcellular location is the midbody. In terms of biological role, essential for sperm flagellum biogenesis and male fertility. The polypeptide is Coiled-coil domain-containing protein 146 (Ccdc146) (Rattus norvegicus (Rat)).